Here is a 223-residue protein sequence, read N- to C-terminus: Deoxyribose-phosphate aldolase (223 aa).

Residue Asp-89 is the Proton donor/acceptor of the active site. Lys-152 functions as the Schiff-base intermediate with acetaldehyde in the catalytic mechanism. The active-site Proton donor/acceptor is Lys-181.

Belongs to the DeoC/FbaB aldolase family. DeoC type 1 subfamily.

The protein resides in the cytoplasm. The enzyme catalyses 2-deoxy-D-ribose 5-phosphate = D-glyceraldehyde 3-phosphate + acetaldehyde. It functions in the pathway carbohydrate degradation; 2-deoxy-D-ribose 1-phosphate degradation; D-glyceraldehyde 3-phosphate and acetaldehyde from 2-deoxy-alpha-D-ribose 1-phosphate: step 2/2. Functionally, catalyzes a reversible aldol reaction between acetaldehyde and D-glyceraldehyde 3-phosphate to generate 2-deoxy-D-ribose 5-phosphate. The polypeptide is Deoxyribose-phosphate aldolase (Listeria monocytogenes serotype 4b (strain F2365)).